A 638-amino-acid polypeptide reads, in one-letter code: Threonine--tRNA ligase (638 aa).

In terms of domain architecture, TGS spans 1–61 (MPKITLPDGT…KNDSKVVIIT (61 aa)). The tract at residues 242-533 (DHRKLGKKHS…LIEQYEAKFP (292 aa)) is catalytic. Zn(2+) contacts are provided by cysteine 333, histidine 384, and histidine 510.

Belongs to the class-II aminoacyl-tRNA synthetase family. As to quaternary structure, homodimer. Zn(2+) serves as cofactor.

It is found in the cytoplasm. It carries out the reaction tRNA(Thr) + L-threonine + ATP = L-threonyl-tRNA(Thr) + AMP + diphosphate + H(+). Its function is as follows. Catalyzes the attachment of threonine to tRNA(Thr) in a two-step reaction: L-threonine is first activated by ATP to form Thr-AMP and then transferred to the acceptor end of tRNA(Thr). Also edits incorrectly charged L-seryl-tRNA(Thr). The polypeptide is Threonine--tRNA ligase (Prochlorococcus marinus (strain MIT 9515)).